Consider the following 337-residue polypeptide: Bifunctional methylenetetrahydrofolate dehydrogenase/cyclohydrolase, mitochondrial (337 aa).

The N-terminal 30 residues, 1–30 (MATALCPLRALGQTAFRPRTRRLHLSAPRA), are a transit peptide targeting the mitochondrion. Substrate-binding positions include 79 to 83 (YVLNK) and 126 to 128 (VQL). Residues 195-197 (GRS) and Arg-228 each bind NAD(+). 304-308 (PGGVG) is a binding site for substrate.

Belongs to the tetrahydrofolate dehydrogenase/cyclohydrolase family. Mg(2+) is required as a cofactor.

It is found in the mitochondrion. It catalyses the reaction (6R)-5,10-methylene-5,6,7,8-tetrahydrofolate + NAD(+) = (6R)-5,10-methenyltetrahydrofolate + NADH. The catalysed reaction is (6R)-5,10-methenyltetrahydrofolate + H2O = (6R)-10-formyltetrahydrofolate + H(+). Although its dehydrogenase activity is NAD-specific, it can also utilize NADP at a reduced efficiency. This is Bifunctional methylenetetrahydrofolate dehydrogenase/cyclohydrolase, mitochondrial (MTHFD2) from Gallus gallus (Chicken).